The following is a 601-amino-acid chain: MSSDSMRNIRNFSIIAHVDHGKSTLADRIIQLCGGLQAREMEAQVLDSNPIERERGITIKAQSVSLPYTAKDGQTYFLNFIDTPGHVDFSYEVSRSLAACEGALLVVDAAQGVEAQSVANCYTAVEQGLEVVPVLNKIDLPTADIERAKAEIEAVIGIDAEDAVAVSAKTGLNIDLVLEAIVHRIPPPKPRDTDKLQALIIDSWFDNYLGVVSLVRVMQGEIKPGSKIQVMSTGRTHLVDKVGVFTPKRKELVALGAGEVGWINASIKDVHGAPVGDTLTLAADPAPHALPGFQEMQPRVFAGLFPVDAEDYPDLREALDKLRLNDAALRFEPESSEAMGFGFRCGFLGMLHMEIVQERLEREYNLNLISTAPTVVYEVLKTDGTIIPMDNPSKLPPLNHVEEIREPIIRANILTPPDYVGNIITLCEEKRGSQIGINYLGSQVQISYELPMAEVVLDFFDKLKSVSRGYASLDYHFLRFQVGPFVRVDTLINGDKVDALSIIVHRSYADRRGRELCEKMKELIPRQMFDVAIQAAVGSQIISRSTVKAMRKNVLAKCYGGDVSRKKKLLEKQKEGKKRMKQVGRVEIPQEAFLAVLQMDK.

One can recognise a tr-type G domain in the interval 7 to 189 (RNIRNFSIIA…AIVHRIPPPK (183 aa)). GTP-binding positions include 19–24 (DHGKST) and 136–139 (NKID).

The protein belongs to the TRAFAC class translation factor GTPase superfamily. Classic translation factor GTPase family. LepA subfamily.

The protein resides in the cell inner membrane. The enzyme catalyses GTP + H2O = GDP + phosphate + H(+). In terms of biological role, required for accurate and efficient protein synthesis under certain stress conditions. May act as a fidelity factor of the translation reaction, by catalyzing a one-codon backward translocation of tRNAs on improperly translocated ribosomes. Back-translocation proceeds from a post-translocation (POST) complex to a pre-translocation (PRE) complex, thus giving elongation factor G a second chance to translocate the tRNAs correctly. Binds to ribosomes in a GTP-dependent manner. In Xanthomonas campestris pv. campestris (strain ATCC 33913 / DSM 3586 / NCPPB 528 / LMG 568 / P 25), this protein is Elongation factor 4.